The primary structure comprises 209 residues: Uracil phosphoribosyltransferase (209 aa).

Residues R79, R104, and 131-139 (DPMLATGNS) contribute to the 5-phospho-alpha-D-ribose 1-diphosphate site. Residues I194 and 199–201 (GDA) each bind uracil. D200 lines the 5-phospho-alpha-D-ribose 1-diphosphate pocket.

Belongs to the UPRTase family. Mg(2+) serves as cofactor.

It catalyses the reaction UMP + diphosphate = 5-phospho-alpha-D-ribose 1-diphosphate + uracil. The protein operates within pyrimidine metabolism; UMP biosynthesis via salvage pathway; UMP from uracil: step 1/1. Its activity is regulated as follows. Allosterically activated by GTP. Its function is as follows. Catalyzes the conversion of uracil and 5-phospho-alpha-D-ribose 1-diphosphate (PRPP) to UMP and diphosphate. The chain is Uracil phosphoribosyltransferase from Polaromonas naphthalenivorans (strain CJ2).